The following is a 340-amino-acid chain: Large ribosomal subunit protein uL10 (340 aa).

The disordered stretch occupies residues 305 to 340 (APQPAEEKVEEAEEEEEEEEEASEEEALAGLGALFG). Positions 312-331 (KVEEAEEEEEEEEEASEEEA) are enriched in acidic residues.

This sequence belongs to the universal ribosomal protein uL10 family. In terms of assembly, part of the 50S ribosomal subunit. Forms part of the ribosomal stalk which helps the ribosome interact with GTP-bound translation factors. Forms a heptameric L10(L12)2(L12)2(L12)2 complex, where L10 forms an elongated spine to which the L12 dimers bind in a sequential fashion.

Functionally, forms part of the ribosomal stalk, playing a central role in the interaction of the ribosome with GTP-bound translation factors. This Thermococcus gammatolerans (strain DSM 15229 / JCM 11827 / EJ3) protein is Large ribosomal subunit protein uL10.